Here is a 198-residue protein sequence, read N- to C-terminus: DnaJ homolog subfamily C member 5 (198 aa).

A phosphoserine mark is found at Ser8, Ser10, Ser12, and Ser15. The J domain occupies Gly13–Leu82. Tyr17 bears the Phosphotyrosine mark. Lys56 carries the N6-acetyllysine modification. Ser151 carries the phosphoserine modification.

As to quaternary structure, oligomers. Homodimer. Interacts with the chaperone complex consisting of HSC70 and SGTA. Interacts with ZDHHC13 (via ANK repeats). Interacts with ZDHHC17 (via ANK repeats). Interacts with SYT1, SYT5 and SYT7, and with SYT9, forming a complex with SNAP25. In terms of processing, ser-10 phosphorylation induces an order-to-disorder transition triggering the interaction with Lys-58. This conformational switch modulates DNAJC5's cellular functions by reducing binding to syntaxin and synaptogamin without altering HSC70 interactions. Palmitoylated. Could be palmitoylated by DHHC3, DHHC7, DHHC15 and DHHC17. Palmitoylation occurs probably in the cysteine-rich domain and regulates DNAJC5 membrane attachment. In terms of tissue distribution, expressed in pancreas, kidney, skeletal muscle, liver, lung, placenta, brain and heart.

It localises to the cytoplasm. The protein localises to the cytosol. It is found in the membrane. Its subcellular location is the cytoplasmic vesicle. The protein resides in the secretory vesicle. It localises to the chromaffin granule membrane. The protein localises to the melanosome. It is found in the cell membrane. Its function is as follows. Acts as a general chaperone in regulated exocytosis. Acts as a co-chaperone for the SNARE protein SNAP-25. Involved in the calcium-mediated control of a late stage of exocytosis. May have an important role in presynaptic function. May be involved in calcium-dependent neurotransmitter release at nerve endings. This is DnaJ homolog subfamily C member 5 from Homo sapiens (Human).